We begin with the raw amino-acid sequence, 80 residues long: Exodeoxyribonuclease 7 small subunit (80 aa).

It belongs to the XseB family. In terms of assembly, heterooligomer composed of large and small subunits.

It localises to the cytoplasm. It carries out the reaction Exonucleolytic cleavage in either 5'- to 3'- or 3'- to 5'-direction to yield nucleoside 5'-phosphates.. Bidirectionally degrades single-stranded DNA into large acid-insoluble oligonucleotides, which are then degraded further into small acid-soluble oligonucleotides. The polypeptide is Exodeoxyribonuclease 7 small subunit (Rickettsia africae (strain ESF-5)).